The primary structure comprises 97 residues: Cytochrome c2 iso-2 (97 aa).

4 residues coordinate heme c: C10, C13, H14, and M75.

It belongs to the cytochrome c family. Post-translationally, binds 1 heme c group covalently per subunit.

In terms of biological role, cytochrome c2 is found mainly in purple, non-sulfur, photosynthetic bacteria where it functions as the electron donor to the oxidized bacteriochlorophyll in the photophosphorylation pathway. However, it may also have a role in the respiratory chain and is found in some non-photosynthetic bacteria. The chain is Cytochrome c2 iso-2 from Magnetospirillum molischianum (Rhodospirillum molischianum).